The following is a 458-amino-acid chain: UDP-N-acetylmuramoylalanine--D-glutamate ligase (458 aa).

ATP is bound at residue 124–130 (GSDGKTT).

This sequence belongs to the MurCDEF family.

It is found in the cytoplasm. It catalyses the reaction UDP-N-acetyl-alpha-D-muramoyl-L-alanine + D-glutamate + ATP = UDP-N-acetyl-alpha-D-muramoyl-L-alanyl-D-glutamate + ADP + phosphate + H(+). It functions in the pathway cell wall biogenesis; peptidoglycan biosynthesis. Its function is as follows. Cell wall formation. Catalyzes the addition of glutamate to the nucleotide precursor UDP-N-acetylmuramoyl-L-alanine (UMA). This chain is UDP-N-acetylmuramoylalanine--D-glutamate ligase, found in Clostridium tetani (strain Massachusetts / E88).